The following is a 496-amino-acid chain: Bifunctional protein HldE (496 aa).

The segment at 1 to 335 is ribokinase; that stretch reads MIKHNPPSPE…GALFRSHGPT (335 aa). ATP is bound at residue 211–214; it reads NRKE. Aspartate 280 is an active-site residue. Residues 363–496 are cytidylyltransferase; the sequence is FTNGCFDILH…IGKLRAGSTS (134 aa).

It in the N-terminal section; belongs to the carbohydrate kinase PfkB family. This sequence in the C-terminal section; belongs to the cytidylyltransferase family. In terms of assembly, homodimer.

It catalyses the reaction D-glycero-beta-D-manno-heptose 7-phosphate + ATP = D-glycero-beta-D-manno-heptose 1,7-bisphosphate + ADP + H(+). The enzyme catalyses D-glycero-beta-D-manno-heptose 1-phosphate + ATP + H(+) = ADP-D-glycero-beta-D-manno-heptose + diphosphate. It participates in nucleotide-sugar biosynthesis; ADP-L-glycero-beta-D-manno-heptose biosynthesis; ADP-L-glycero-beta-D-manno-heptose from D-glycero-beta-D-manno-heptose 7-phosphate: step 1/4. Its pathway is nucleotide-sugar biosynthesis; ADP-L-glycero-beta-D-manno-heptose biosynthesis; ADP-L-glycero-beta-D-manno-heptose from D-glycero-beta-D-manno-heptose 7-phosphate: step 3/4. Functionally, catalyzes the phosphorylation of D-glycero-D-manno-heptose 7-phosphate at the C-1 position to selectively form D-glycero-beta-D-manno-heptose-1,7-bisphosphate. Its function is as follows. Catalyzes the ADP transfer from ATP to D-glycero-beta-D-manno-heptose 1-phosphate, yielding ADP-D-glycero-beta-D-manno-heptose. This chain is Bifunctional protein HldE, found in Mesorhizobium japonicum (strain LMG 29417 / CECT 9101 / MAFF 303099) (Mesorhizobium loti (strain MAFF 303099)).